The chain runs to 177 residues: ATP synthase subunit delta, chloroplastic (177 aa).

Belongs to the ATPase delta chain family. F-type ATPases have 2 components, F(1) - the catalytic core - and F(0) - the membrane proton channel. F(1) has five subunits: alpha(3), beta(3), gamma(1), delta(1), epsilon(1). CF(0) has four main subunits: a(1), b(1), b'(1) and c(10-14). The alpha and beta chains form an alternating ring which encloses part of the gamma chain. F(1) is attached to F(0) by a central stalk formed by the gamma and epsilon chains, while a peripheral stalk is formed by the delta, b and b' chains.

It localises to the plastid. It is found in the chloroplast thylakoid membrane. F(1)F(0) ATP synthase produces ATP from ADP in the presence of a proton or sodium gradient. F-type ATPases consist of two structural domains, F(1) containing the extramembraneous catalytic core and F(0) containing the membrane proton channel, linked together by a central stalk and a peripheral stalk. During catalysis, ATP synthesis in the catalytic domain of F(1) is coupled via a rotary mechanism of the central stalk subunits to proton translocation. Its function is as follows. This protein is part of the stalk that links CF(0) to CF(1). It either transmits conformational changes from CF(0) to CF(1) or is implicated in proton conduction. The sequence is that of ATP synthase subunit delta, chloroplastic from Galdieria sulphuraria (Red alga).